The sequence spans 440 residues: Serine/threonine-protein kinase toxin HipA (440 aa).

Serine 150 is modified (phosphoserine; by autocatalysis). ATP is bound by residues 152–157, lysine 181, and 234–236; these read AGAQEK and ERF. Aspartate 309 acts as the Proton acceptor in catalysis. ATP-binding positions include 311 to 314 and 331 to 332; these read HAKN and YD. Residues 379–382 mediate DNA binding; sequence KVLR.

It belongs to the HipA Ser/Thr kinase family. Forms a HipA(2)HipB(2) heterotetramer which can interact with a single operator on DNA. When 2 operators are present each HipB dimer contacts 1 HipA molecule, which are brought together by the DNA bend and dimerize, blocking the HipA active site and inactivating its toxic activity. Mutations present in allele hipA7 (G22S and D291A) decrease the affinity of HipA for HipB. Post-translationally, autophosphorylates intermolecularly on Ser-150; phosphorylated form not seen to bind ATP and no longer has kinase activity.

The enzyme catalyses L-seryl-[protein] + ATP = O-phospho-L-seryl-[protein] + ADP + H(+). It catalyses the reaction L-threonyl-[protein] + ATP = O-phospho-L-threonyl-[protein] + ADP + H(+). With respect to regulation, once phosphorylated no longer has kinase activity. In terms of biological role, toxic component of a type II toxin-antitoxin (TA) system, first identified by mutations that increase production of persister cells, a fraction of cells that are phenotypic variants not killed by antibiotics, which lead to multidrug tolerance. Persistence may be ultimately due to global remodeling of the persister cell's ribosomes. Phosphorylates Glu-tRNA-ligase (AC P04805, gltX, on 'Ser-239') in vivo. Phosphorylation of GltX prevents it from being charged, leading to an increase in uncharged tRNA(Glu). This induces amino acid starvation and the stringent response via RelA/SpoT and increased (p)ppGpp levels, which inhibits replication, transcription, translation and cell wall synthesis, reducing growth and leading to persistence and multidrug resistance. Once the level of HipA exceeds a threshold cells become dormant, and the length of dormancy is determined by how much HipA levels exceed the threshold. The hipA7 mutation (a double G22S D291A mutation) leads to increased generation of persister cells (cells that survive antibiotic treatment) probably by entering into a dormant state, as well as cold-sensitivity. Wild-type cells produce persisters at a frequency of 10(-6) to 10(-5) whereas hipA7 cells produce about 100-fold more persisters. hipA7 decreases the affinity for antitoxin HipB, leading to increased HipA levels and persistence; depending on the protein level, can be toxic enough to reduce cell growth or even kill cells. Generation of persister cells requires (p)ppGpp as cells lacking relA or relA/spoT generate fewer or no persister cells respectively compared to hipA7. The toxic effect of HipA is neutralized by its cognate antitoxin HipB. Also neutralized by overexpression of gltX. With HipB acts as a corepressor for transcription of the hipBA promoter; binding of HipA-HipB to DNA induces a 70 degree bend. This brings together and dimerizes 2 HipA molecules, which distorts the promoter region, preventing sigma-factor binding; additionally HipA and HipB would physically prevent RNA core polymerase from contacting the -35 promoter box. May play a role in biofilm formation. The chain is Serine/threonine-protein kinase toxin HipA (hipA) from Escherichia coli (strain K12).